Consider the following 760-residue polypeptide: ATP-dependent RNA helicase dbp7 (760 aa).

The span at 23 to 34 (KLKGGTWRDRLS) shows a compositional bias: basic and acidic residues. The disordered stretch occupies residues 23–129 (KLKGGTWRDR…EPVEDAKPTN (107 aa)). Basic residues predominate over residues 38–47 (IAQHRTKNPR). The segment covering 58–72 (KGPQNPNRIQVSSSR) has biased composition (polar residues). The span at 77–94 (QKTDADGDNEKSRHDNKQ) shows a compositional bias: basic and acidic residues. Over residues 99-110 (FVSSLFSKNPTP) the composition is skewed to polar residues. A Q motif motif is present at residues 137 to 166 (DTFTNLGLSPSLAAHLLTKLELKAPTGIQK). In terms of domain architecture, Helicase ATP-binding spans 170–372 (SQLLKEDSDA…EISLKDAVHI (203 aa)). 183–190 (AETGSGKT) contributes to the ATP binding site. A DEAD box motif is present at residues 308-311 (DEGD). A Helicase C-terminal domain is found at 396–609 (QLKQSYAIVA…LTRTTAEDIL (214 aa)). Disordered regions lie at residues 453–490 (YRDE…AVAF) and 692–760 (SKIN…FNLA). Positions 456–470 (ESEDEDEEKEDDDED) are enriched in acidic residues. Positions 701–716 (PGDKEAKKDYKAERNT) are enriched in basic and acidic residues. The span at 731-740 (QPSNDATSAA) shows a compositional bias: polar residues.

This sequence belongs to the DEAD box helicase family. DDX31/DBP7 subfamily.

The protein localises to the nucleus. Its subcellular location is the nucleolus. It carries out the reaction ATP + H2O = ADP + phosphate + H(+). In terms of biological role, ATP-binding RNA helicase involved in the biogenesis of 60S ribosomal subunits and is required for the normal formation of 25S and 5.8S rRNAs. The sequence is that of ATP-dependent RNA helicase dbp7 (dbp7) from Aspergillus oryzae (strain ATCC 42149 / RIB 40) (Yellow koji mold).